The following is a 375-amino-acid chain: MKFELDTTDGRARRGRLVFDRGVVETPAFMPVGTYGTVKGMTPEEVEATGAQIILGNTFHLWLRPGQEIMKLHGDLHDFMQWKGPILTDSGGFQVFSLGDIRKITEQGVHFRNPINGDPIFLDPEKSMEIQYDLGSDIVMIFDECTPYPADWDYAKRSMEMSLRWAKRSRDRFDSLGNKNALFGIIQGSVYEDLRDISVKGLVEIGFDGYAVGGLAVGEPKADMHRILEHVCPQIPADKPRYLMGVGKPEDLVEGVRRGIDMFDCVMPTRNARNGHLFVTDGVVKIRNAKHKSDTSPLDAECDCYTCRNYSRAYLHHLDRCNEILGARLNTIHNLRYYQRLMAGLRKAIEEGKLESFVTEFYQRQGRPVPPLNVD.

The active-site Proton acceptor is the Asp89. Residues 89–93 (DSGGF), Asp143, Gln187, and Gly214 contribute to the substrate site. The interval 245 to 251 (GVGKPED) is RNA binding. Asp264 serves as the catalytic Nucleophile. Positions 269–273 (TRNAR) are RNA binding; important for wobble base 34 recognition. The Zn(2+) site is built by Cys302, Cys304, Cys307, and His333.

The protein belongs to the queuine tRNA-ribosyltransferase family. In terms of assembly, homodimer. Within each dimer, one monomer is responsible for RNA recognition and catalysis, while the other monomer binds to the replacement base PreQ1. Zn(2+) serves as cofactor.

It catalyses the reaction 7-aminomethyl-7-carbaguanine + guanosine(34) in tRNA = 7-aminomethyl-7-carbaguanosine(34) in tRNA + guanine. Its pathway is tRNA modification; tRNA-queuosine biosynthesis. Catalyzes the base-exchange of a guanine (G) residue with the queuine precursor 7-aminomethyl-7-deazaguanine (PreQ1) at position 34 (anticodon wobble position) in tRNAs with GU(N) anticodons (tRNA-Asp, -Asn, -His and -Tyr). Catalysis occurs through a double-displacement mechanism. The nucleophile active site attacks the C1' of nucleotide 34 to detach the guanine base from the RNA, forming a covalent enzyme-RNA intermediate. The proton acceptor active site deprotonates the incoming PreQ1, allowing a nucleophilic attack on the C1' of the ribose to form the product. After dissociation, two additional enzymatic reactions on the tRNA convert PreQ1 to queuine (Q), resulting in the hypermodified nucleoside queuosine (7-(((4,5-cis-dihydroxy-2-cyclopenten-1-yl)amino)methyl)-7-deazaguanosine). The polypeptide is Queuine tRNA-ribosyltransferase (Salmonella agona (strain SL483)).